The sequence spans 122 residues: Putative ankyrin repeat protein L22 (122 aa).

4 ANK repeats span residues 3–32, 33–62, 63–92, and 94–122; these read DNNY…DIKA, DDDY…DIRV, NNDY…NIRA, and DDYA…VLNQ.

The polypeptide is Putative ankyrin repeat protein L22 (Acanthamoeba polyphaga (Amoeba)).